The chain runs to 312 residues: Methionyl-tRNA formyltransferase (312 aa).

109–112 (SLLP) is a (6S)-5,6,7,8-tetrahydrofolate binding site.

The protein belongs to the Fmt family.

The catalysed reaction is L-methionyl-tRNA(fMet) + (6R)-10-formyltetrahydrofolate = N-formyl-L-methionyl-tRNA(fMet) + (6S)-5,6,7,8-tetrahydrofolate + H(+). Functionally, attaches a formyl group to the free amino group of methionyl-tRNA(fMet). The formyl group appears to play a dual role in the initiator identity of N-formylmethionyl-tRNA by promoting its recognition by IF2 and preventing the misappropriation of this tRNA by the elongation apparatus. This is Methionyl-tRNA formyltransferase from Geotalea daltonii (strain DSM 22248 / JCM 15807 / FRC-32) (Geobacter daltonii).